A 280-amino-acid chain; its full sequence is Tryptophan 2,3-dioxygenase (280 aa).

Residues 47 to 51 (FVVQH), Tyr-109, and Arg-113 contribute to the substrate site. His-236 is a heme binding site. Residue Thr-250 participates in substrate binding.

This sequence belongs to the tryptophan 2,3-dioxygenase family. Homotetramer. The cofactor is heme.

It carries out the reaction L-tryptophan + O2 = N-formyl-L-kynurenine. The protein operates within amino-acid degradation; L-tryptophan degradation via kynurenine pathway; L-kynurenine from L-tryptophan: step 1/2. Heme-dependent dioxygenase that catalyzes the oxidative cleavage of the L-tryptophan (L-Trp) pyrrole ring and converts L-tryptophan to N-formyl-L-kynurenine. Catalyzes the oxidative cleavage of the indole moiety. This Serratia proteamaculans (strain 568) protein is Tryptophan 2,3-dioxygenase.